Consider the following 78-residue polypeptide: D-alanyl carrier protein (78 aa).

A Carrier domain is found at 1 to 77 (MAVKEEVVEI…KVIAKVESLI (77 aa)). Ser-35 carries the O-(pantetheine 4'-phosphoryl)serine modification.

It belongs to the DltC family. Post-translationally, 4'-phosphopantetheine is transferred from CoA to a specific serine of apo-DCP.

It localises to the cytoplasm. It functions in the pathway cell wall biogenesis; lipoteichoic acid biosynthesis. In terms of biological role, carrier protein involved in the D-alanylation of lipoteichoic acid (LTA). The loading of thioester-linked D-alanine onto DltC is catalyzed by D-alanine--D-alanyl carrier protein ligase DltA. The DltC-carried D-alanyl group is further transferred to cell membrane phosphatidylglycerol (PG) by forming an ester bond, probably catalyzed by DltD. D-alanylation of LTA plays an important role in modulating the properties of the cell wall in Gram-positive bacteria, influencing the net charge of the cell wall. This is D-alanyl carrier protein from Leuconostoc citreum (strain KM20).